We begin with the raw amino-acid sequence, 127 residues long: Apolipoprotein C-IV (127 aa).

An N-terminal signal peptide occupies residues methionine 1–cysteine 27.

It belongs to the apolipoprotein C4 family.

It localises to the secreted. In terms of biological role, may participate in lipoprotein metabolism. This is Apolipoprotein C-IV (APOC4) from Chlorocebus sabaeus (Green monkey).